An 87-amino-acid polypeptide reads, in one-letter code: Putative regulatory protein BCQ_3657 (87 aa).

The protein belongs to the RemA family.

This Bacillus cereus (strain Q1) protein is Putative regulatory protein BCQ_3657.